The primary structure comprises 270 residues: Calpain small subunit 1 (270 aa).

M1 is subject to N-acetylmethionine. S6 bears the Phosphoserine mark. Residues 98–132 (EEERQFRKLFVQLAGDDMEVSATELMNILNKVVTR) enclose the EF-hand 1; atypical domain. The Ca(2+) site is built by A111, D114, E116, E121, D139, D154, D156, T158, K160, and E165. 4 EF-hand domains span residues 141 to 174 (FGIDTCRSMVAVMDSDTTGKLGFEEFKYLWNNIK), 171 to 206 (NNIKKWQGIYKRFDTDRSGTIGSNELPGAFEAAGFH), 207 to 235 (LNQHIYSMIIRRYSDETGNMDFDNFISCL), and 236 to 270 (VRLDAMFRAFRSLDKNGTGQIQVNIQEWLQLTMYS). Position 181 is an N6-acetyllysine (K181). Ca(2+) is bound by residues D184, D186, S188, T190, E195, and D227.

Homodimer or heterodimer of a large (catalytic) and a small (regulatory) subunit. In presence of calcium, the heterodimer dissociates.

It is found in the cytoplasm. The protein resides in the cell membrane. Its function is as follows. Regulatory subunit of the calcium-regulated non-lysosomal thiol-protease which catalyzes limited proteolysis of substrates involved in cytoskeletal remodeling and signal transduction. Essential for embryonic development. The chain is Calpain small subunit 1 (Capns1) from Rattus norvegicus (Rat).